We begin with the raw amino-acid sequence, 191 residues long: UPF0149 protein VV1_1551 (191 aa).

Belongs to the UPF0149 family.

The chain is UPF0149 protein VV1_1551 from Vibrio vulnificus (strain CMCP6).